The chain runs to 796 residues: Vacuolar protein sorting-associated protein 35 (796 aa).

The residue at position 7 (serine 7) is a Phosphoserine. Interaction with SNX3 regions lie at residues 25 to 44 (VQSF…DALK) and 205 to 215 (DREKRERERQE). Positions 438-796 (CYVLSNVLDY…EGPIYEGLIL (359 aa)) are interaction with SLC11A2. Residues 500 to 693 (SEDPDQQYLI…DKNGEELHGG (194 aa)) form an interaction with IGF2R cytoplasmic domain region. Phosphoserine is present on serine 783. Tyrosine 791 bears the Phosphotyrosine mark.

Belongs to the VPS35 family. In terms of assembly, component of the heterotrimeric retromer cargo-selective complex (CSC), also decribed as vacuolar protein sorting subcomplex (VPS), formed by VPS26 (VPS26A or VPS26B), VPS29 and VPS35. The CSC has a highly elongated structure with VPS26 and VPS29 binding independently at opposite distal ends of VPS35 as central platform. The CSC is believed to associate with variable sorting nexins to form functionally distinct retromer complex variants. The originally described retromer complex (also called SNX-BAR retromer) is a pentamer containing the CSC and a heterodimeric membrane-deforming subcomplex formed between SNX1 or SNX2 and SNX5 or SNX6 (also called SNX-BAR subcomplex); the respective CSC and SNX-BAR subcomplexes associate with low affinity. The CSC associates with SNX3 to form a SNX3-retromer complex. The CSC associates with SNX27, the WASH complex and the SNX-BAR subcomplex to form the SNX27-retromer complex. Interacts with VPS26A, VPS26B, VPS29, SNX1, SNX2, IGF2R, SNX3, GOLPH3, LRRK2, SLC11A2, WASHC2A, WASHC2C, FKBP15, WASHC1, RAB7A, SNX27, WASHC5, EHD1. Interacts with MAGEL2; leading to recruitment of the TRIM27:MAGEL2 E3 ubiquitin ligase complex retromer-containing endosomes. Interacts with SORCS2. (Microbial infection) Interacts with human papillomavirus 16 minor capsid protein L2 (via C-terminus); this interaction mediates the transport of the capsid from the early endosome to the Golgi apparatus. Ubiquitous. Highly expressed in heart, brain, placenta, skeletal muscle, spleen, thymus, testis, ovary, small intestine, kidney and colon.

It localises to the cytoplasm. Its subcellular location is the membrane. The protein resides in the endosome. It is found in the early endosome. The protein localises to the late endosome. In terms of biological role, acts as a component of the retromer cargo-selective complex (CSC). The CSC is believed to be the core functional component of retromer or respective retromer complex variants acting to prevent missorting of selected transmembrane cargo proteins into the lysosomal degradation pathway. The recruitment of the CSC to the endosomal membrane involves RAB7A and SNX3. The CSC seems to associate with the cytoplasmic domain of cargo proteins predominantly via VPS35; however, these interactions seem to be of low affinity and retromer SNX proteins may also contribute to cargo selectivity thus questioning the classical function of the CSC. The SNX-BAR retromer mediates retrograde transport of cargo proteins from endosomes to the trans-Golgi network (TGN) and is involved in endosome-to-plasma membrane transport for cargo protein recycling. The SNX3-retromer mediates the retrograde endosome-to-TGN transport of WLS distinct from the SNX-BAR retromer pathway. The SNX27-retromer is believed to be involved in endosome-to-plasma membrane trafficking and recycling of a broad spectrum of cargo proteins. The CSC seems to act as recruitment hub for other proteins, such as the WASH complex and TBC1D5. Required for retrograde transport of lysosomal enzyme receptor IGF2R and SLC11A2. Required to regulate transcytosis of the polymeric immunoglobulin receptor (pIgR-pIgA). Required for endosomal localization of WASHC2C. Mediates the association of the CSC with the WASH complex via WASHC2. Required for the endosomal localization of TBC1D5. Functionally, (Microbial infection) The heterotrimeric retromer cargo-selective complex (CSC) mediates the exit of human papillomavirus from the early endosome and the delivery to the Golgi apparatus. The sequence is that of Vacuolar protein sorting-associated protein 35 from Homo sapiens (Human).